We begin with the raw amino-acid sequence, 563 residues long: Arginine--tRNA ligase (563 aa).

A 'HIGH' region motif is present at residues 119–129; the sequence is ANPTGPLHVGR.

It belongs to the class-I aminoacyl-tRNA synthetase family.

The protein localises to the cytoplasm. It catalyses the reaction tRNA(Arg) + L-arginine + ATP = L-arginyl-tRNA(Arg) + AMP + diphosphate. The sequence is that of Arginine--tRNA ligase from Methanocella arvoryzae (strain DSM 22066 / NBRC 105507 / MRE50).